We begin with the raw amino-acid sequence, 422 residues long: Putative FBD-associated F-box protein At1g55030 (422 aa).

The region spanning 8–60 is the F-box domain; that stretch reads TDMISQLPEPLILQILGSLPTKVAITTSVLSKQWQSHWKMMPKLEFDSFLRRL. 3 LRR repeats span residues 132-153, 154-175, and 180-201; these read TLETLELILNVVMDVPPSVYLK, SLKTLYLLAVDFKDDESVINLL, and NLQDLVMRRNSSSNVKTFTIAV. The region spanning 342 to 391 is the FBD domain; it reads EWNQPKNVPECLHHLEKFIWEGYKWKREEIEVAKYILKNTNRLKRAIFSL.

The polypeptide is Putative FBD-associated F-box protein At1g55030 (Arabidopsis thaliana (Mouse-ear cress)).